A 113-amino-acid polypeptide reads, in one-letter code: Beta-microseminoprotein A1 (113 aa).

A signal peptide spans 1–20 (MNVLLGGLVIFATFVTLCNG). 5 disulfides stabilise this stretch: C22–C70, C38–C62, C57–C93, C60–C69, and C84–C107.

This sequence belongs to the beta-microseminoprotein family.

It is found in the secreted. The sequence is that of Beta-microseminoprotein A1 (MSPA) from Saguinus oedipus (Cotton-top tamarin).